Consider the following 613-residue polypeptide: Glucose-6-phosphate isomerase 1, chloroplastic (613 aa).

A compositionally biased stretch (low complexity) spans 1–14; sequence MASLSGLYSSSPSL. The segment at 1 to 21 is disordered; that stretch reads MASLSGLYSSSPSLKPAKNHS. The transit peptide at 1–48 directs the protein to the chloroplast; sequence MASLSGLYSSSPSLKPAKNHSFKALPAQSRDSFSFPHTSKPTNLPLTL. Residue Glu392 is the Proton donor of the active site. Catalysis depends on residues His421 and Lys526. Ser595 carries the phosphoserine modification.

This sequence belongs to the GPI family.

The protein resides in the plastid. Its subcellular location is the chloroplast stroma. It carries out the reaction alpha-D-glucose 6-phosphate = beta-D-fructose 6-phosphate. It functions in the pathway carbohydrate degradation; glycolysis; D-glyceraldehyde 3-phosphate and glycerone phosphate from D-glucose: step 2/4. Its pathway is carbohydrate biosynthesis; gluconeogenesis. Inhibited by glycerol-3-P (G3P). Functionally, promotes the synthesis of starch in leaves. This Arabidopsis thaliana (Mouse-ear cress) protein is Glucose-6-phosphate isomerase 1, chloroplastic (PGI1).